Consider the following 428-residue polypeptide: Adenosylhomocysteinase (428 aa).

Residues Thr62, Asp134, and Glu159 each coordinate substrate. 160–162 contacts NAD(+); that stretch reads TTT. Substrate is bound by residues Lys189 and Asp193. Residues Asn194, 223–228, Glu246, Asn281, 302–304, and Asn349 each bind NAD(+); these read GYGWCG and SGH.

Belongs to the adenosylhomocysteinase family. The cofactor is NAD(+).

The protein resides in the cytoplasm. It catalyses the reaction S-adenosyl-L-homocysteine + H2O = L-homocysteine + adenosine. Its pathway is amino-acid biosynthesis; L-homocysteine biosynthesis; L-homocysteine from S-adenosyl-L-homocysteine: step 1/1. In terms of biological role, may play a key role in the regulation of the intracellular concentration of adenosylhomocysteine. The protein is Adenosylhomocysteinase of Gloeobacter violaceus (strain ATCC 29082 / PCC 7421).